A 296-amino-acid chain; its full sequence is UPF0761 membrane protein YE0031 (296 aa).

The next 7 membrane-spanning stretches (helical) occupy residues 44–64, 67–87, 108–128, 136–156, 185–205, 212–232, and 246–266; these read LLSLVPLVTVIFALFAAFPMF, ISIKLKAFIFTNFMPATGDII, GLIVTALLLIYSVDSVLNIIW, LVFSFAVYWMVLTLGPILVGA, LFPLLISWVSFWLLYSVVPTV, ALIGALVAALFFELGKKGFTM, and VLAVIPILFLWVYWSWCIVLL.

It belongs to the UPF0761 family.

The protein resides in the cell inner membrane. This chain is UPF0761 membrane protein YE0031, found in Yersinia enterocolitica serotype O:8 / biotype 1B (strain NCTC 13174 / 8081).